The primary structure comprises 156 residues: Small ribosomal subunit protein uS7 (156 aa).

It belongs to the universal ribosomal protein uS7 family. As to quaternary structure, part of the 30S ribosomal subunit. Contacts proteins S9 and S11.

Its function is as follows. One of the primary rRNA binding proteins, it binds directly to 16S rRNA where it nucleates assembly of the head domain of the 30S subunit. Is located at the subunit interface close to the decoding center, probably blocks exit of the E-site tRNA. The polypeptide is Small ribosomal subunit protein uS7 (Enterobacter sp. (strain 638)).